A 94-amino-acid chain; its full sequence is Host-modulation protein 11K (94 aa).

Interacts with host GRB2; this interaction alters host cell environment by modulating host signaling pathways.

It localises to the host cytoplasm. Enhances viral DNA replication and virion release. Mechansitically, optimizes viral DNA replication by interacting with host GRB2 to inhibit the negative effect of ERK signaling on B19 viral replication. Plays a role in viral infectivity. Induces apoptosis of primary erythroid progenitor cells. The protein is Host-modulation protein 11K (11K) of Human parvovirus B19 (strain HV) (HPV B19).